Reading from the N-terminus, the 148-residue chain is Large ribosomal subunit protein bL9 (148 aa).

Belongs to the bacterial ribosomal protein bL9 family.

In terms of biological role, binds to the 23S rRNA. This chain is Large ribosomal subunit protein bL9, found in Staphylococcus epidermidis (strain ATCC 35984 / DSM 28319 / BCRC 17069 / CCUG 31568 / BM 3577 / RP62A).